Here is a 339-residue protein sequence, read N- to C-terminus: Fructose-1,6-bisphosphatase class 1 (339 aa).

Positions 94, 116, 118, and 119 each coordinate Mg(2+). Substrate-binding positions include 119 to 122 (DGSS), Asn210, and Lys276. Glu282 provides a ligand contact to Mg(2+).

This sequence belongs to the FBPase class 1 family. In terms of assembly, homotetramer. It depends on Mg(2+) as a cofactor.

Its subcellular location is the cytoplasm. The catalysed reaction is beta-D-fructose 1,6-bisphosphate + H2O = beta-D-fructose 6-phosphate + phosphate. The protein operates within carbohydrate biosynthesis; gluconeogenesis. This is Fructose-1,6-bisphosphatase class 1 from Burkholderia ambifaria (strain ATCC BAA-244 / DSM 16087 / CCUG 44356 / LMG 19182 / AMMD) (Burkholderia cepacia (strain AMMD)).